Reading from the N-terminus, the 200-residue chain is Ribonuclease HII (200 aa).

The 190-residue stretch at 11–200 (QSIAGVDEVG…VRRALISLTG (190 aa)) folds into the RNase H type-2 domain. Aspartate 17, glutamate 18, and aspartate 109 together coordinate a divalent metal cation.

This sequence belongs to the RNase HII family. The cofactor is Mn(2+). Mg(2+) serves as cofactor.

Its subcellular location is the cytoplasm. It carries out the reaction Endonucleolytic cleavage to 5'-phosphomonoester.. Endonuclease that specifically degrades the RNA of RNA-DNA hybrids. In Hamiltonella defensa subsp. Acyrthosiphon pisum (strain 5AT), this protein is Ribonuclease HII.